Reading from the N-terminus, the 332-residue chain is Fructose-1,6-bisphosphatase class 1 (332 aa).

Residues E94, D116, L118, and D119 each coordinate Mg(2+). Residues 119 to 122 (DGSS), N211, Y239, 257 to 259 (YLY), and K269 each bind substrate. Position 275 (E275) interacts with Mg(2+).

Belongs to the FBPase class 1 family. In terms of assembly, homotetramer. The cofactor is Mg(2+).

It localises to the cytoplasm. It catalyses the reaction beta-D-fructose 1,6-bisphosphate + H2O = beta-D-fructose 6-phosphate + phosphate. The protein operates within carbohydrate biosynthesis; Calvin cycle. This chain is Fructose-1,6-bisphosphatase class 1, found in Synechococcus sp. (strain JA-2-3B'a(2-13)) (Cyanobacteria bacterium Yellowstone B-Prime).